Consider the following 1215-residue polypeptide: DNA-directed RNA polymerase subunit beta' (1215 aa).

The Zn(2+) site is built by Cys60, Cys62, Cys75, and Cys78. Positions 450, 452, and 454 each coordinate Mg(2+). Zn(2+) is bound by residues Cys818, Cys892, Cys899, and Cys902.

It belongs to the RNA polymerase beta' chain family. As to quaternary structure, the RNAP catalytic core consists of 2 alpha, 1 beta, 1 beta' and 1 omega subunit. When a sigma factor is associated with the core the holoenzyme is formed, which can initiate transcription. Mg(2+) is required as a cofactor. The cofactor is Zn(2+).

The catalysed reaction is RNA(n) + a ribonucleoside 5'-triphosphate = RNA(n+1) + diphosphate. Functionally, DNA-dependent RNA polymerase catalyzes the transcription of DNA into RNA using the four ribonucleoside triphosphates as substrates. This is DNA-directed RNA polymerase subunit beta' from Streptococcus suis (strain 98HAH33).